Here is a 376-residue protein sequence, read N- to C-terminus: Erythronate-4-phosphate dehydrogenase (376 aa).

Residues Ser45 and Thr67 each coordinate substrate. Asp147 lines the NAD(+) pocket. Arg209 is a catalytic residue. Residue Asp233 coordinates NAD(+). Residue Glu238 is part of the active site. His255 (proton donor) is an active-site residue. Gly258 serves as a coordination point for NAD(+). Tyr259 lines the substrate pocket.

The protein belongs to the D-isomer specific 2-hydroxyacid dehydrogenase family. PdxB subfamily. As to quaternary structure, homodimer.

It localises to the cytoplasm. The enzyme catalyses 4-phospho-D-erythronate + NAD(+) = (R)-3-hydroxy-2-oxo-4-phosphooxybutanoate + NADH + H(+). Its pathway is cofactor biosynthesis; pyridoxine 5'-phosphate biosynthesis; pyridoxine 5'-phosphate from D-erythrose 4-phosphate: step 2/5. Catalyzes the oxidation of erythronate-4-phosphate to 3-hydroxy-2-oxo-4-phosphonooxybutanoate. The sequence is that of Erythronate-4-phosphate dehydrogenase from Shewanella sp. (strain ANA-3).